Consider the following 187-residue polypeptide: Oleosin Zm-II (187 aa).

Ala-2 bears the N-acetylalanine mark. Residues 2 to 51 (ADRDRSGIYGGAHATYGQQQQQGGGGRPMGEQVKKGMLHDKGPTASQALT) form a polar region. Positions 17–42 (YGQQQQQGGGGRPMGEQVKKGMLHDK) are disordered. The segment covering 33–42 (QVKKGMLHDK) has biased composition (basic and acidic residues). Helical transmembrane passes span 50–70 (LTVA…GLAL), 83–103 (VFLI…TAVM), and 104–124 (GFLT…CLAN). The segment at 52–123 (VATLFPLGGL…GGLSSLTCLA (72 aa)) is hydrophobic. The segment covering 155 to 169 (TAQAGQAIQGRAQEA) has biased composition (low complexity). A disordered region spans residues 155-187 (TAQAGQAIQGRAQEAGTGGGAGAGAGGGGRASS). A compositionally biased stretch (gly residues) spans 170–187 (GTGGGAGAGAGGGGRASS).

The protein belongs to the oleosin family. In terms of processing, the N-terminus is blocked. Found in embryonic axis, scutellum, and aleurone layer.

It localises to the lipid droplet. The protein localises to the membrane. Functionally, may have a structural role to stabilize the lipid body during desiccation of the seed by preventing coalescence of the oil. Probably interacts with both lipid and phospholipid moieties of lipid bodies. May also provide recognition signals for specific lipase anchorage in lipolysis during seedling growth. The polypeptide is Oleosin Zm-II (OLE18) (Zea mays (Maize)).